A 108-amino-acid polypeptide reads, in one-letter code: UPF0060 membrane protein YE2027 (108 aa).

Helical transmembrane passes span Leu-6–Leu-26, Gly-29–Leu-49, Val-59–Asp-79, and Leu-85–Trp-105.

This sequence belongs to the UPF0060 family.

The protein resides in the cell inner membrane. The protein is UPF0060 membrane protein YE2027 of Yersinia enterocolitica serotype O:8 / biotype 1B (strain NCTC 13174 / 8081).